A 204-amino-acid chain; its full sequence is Probable GTP-binding protein EngB (204 aa).

In terms of domain architecture, EngB-type G spans 23 to 195 (TLPEIAFVGR…ASALMQLLAM (173 aa)). Residues 31 to 38 (GRSNVGKS), 58 to 62 (GRTRE), 76 to 79 (DLPG), 143 to 146 (TKID), and 174 to 176 (FSA) contribute to the GTP site. The Mg(2+) site is built by Ser38 and Thr60.

Belongs to the TRAFAC class TrmE-Era-EngA-EngB-Septin-like GTPase superfamily. EngB GTPase family. It depends on Mg(2+) as a cofactor.

Functionally, necessary for normal cell division and for the maintenance of normal septation. The polypeptide is Probable GTP-binding protein EngB (Gemmatimonas aurantiaca (strain DSM 14586 / JCM 11422 / NBRC 100505 / T-27)).